The sequence spans 103 residues: Thioredoxin-1 (103 aa).

The Thioredoxin domain maps to 2–103 (VTQFKTASEF…AIKQAIAANA (102 aa)). Catalysis depends on nucleophile residues C30 and C33. C30 and C33 form a disulfide bridge. Glycyl lysine isopeptide (Lys-Gly) (interchain with G-Cter in ubiquitin) cross-links involve residues K54, K66, and K96.

Belongs to the thioredoxin family. Monomer. Part of the heterodimeric LMA1 complex together with the proteinase inhibitor PBI2. Most of the thioredoxin of yeast is in this complex rather than the well-studied monomer. LMA1 binds to the ATPase SEC18. In terms of processing, reversible disulfide bond formation between Cys-30 and Cys-33, reverted by thioredoxin reductase TRR1 using NADPH as hydrogen donor.

It is found in the nucleus. It localises to the cytoplasm. Its subcellular location is the golgi apparatus membrane. The protein localises to the mitochondrion intermembrane space. In terms of biological role, participates as a hydrogen donor in redox reactions through the reversible oxidation of its active center dithiol to a disulfide, accompanied by the transfer of 2 electrons and 2 protons. It is involved in many cellular processes, including deoxyribonucleotide synthesis, repair of oxidatively damaged proteins, protein folding, sulfur metabolism, and redox homeostasis. Thioredoxin-dependent enzymes include phosphoadenosine-phosphosulfate reductase MET16, alkyl-hydroperoxide reductase DOT5, thioredoxin peroxidases TSA1 and TSA2, alkyl hydroperoxide reductase AHP1, and peroxiredoxin HYR1. Thioredoxin is also involved in protection against reducing stress. As part of the LMA1 complex, it is involved in the facilitation of vesicle fusion such as homotypic vacuole and ER-derived COPII vesicle fusion with the Golgi. This activity does not require the redox mechanism. The protein is Thioredoxin-1 (TRX1) of Saccharomyces cerevisiae (strain ATCC 204508 / S288c) (Baker's yeast).